The chain runs to 366 residues: Putative amino-acid transporter MJ1196 (366 aa).

Helical transmembrane passes span 14-34, 37-57, 87-107, 111-131, 141-161, 173-193, 205-225, 247-267, 291-311, 314-334, and 346-366; these read ITSI…LLFG, IIWG…PFAY, ILWL…EIVF, FNVS…ILGG, IFGI…GIKI, ILTI…TMPL, GLLV…LTIV, FLLA…LFTL, IPYY…IFDA, LVDM…LAVF, and LISM…FIIL.

Belongs to the amino acid-polyamine-organocation (APC) superfamily.

Its subcellular location is the cell membrane. The sequence is that of Putative amino-acid transporter MJ1196 from Methanocaldococcus jannaschii (strain ATCC 43067 / DSM 2661 / JAL-1 / JCM 10045 / NBRC 100440) (Methanococcus jannaschii).